The primary structure comprises 460 residues: Chromosomal replication initiator protein DnaA (460 aa).

Residues 1 to 78 (MENFWQACSA…VPVEVQFVLD (78 aa)) form a domain I, interacts with DnaA modulators region. The tract at residues 78 to 123 (DPRLVAARRPAAQASVVSDRADDVPSNVLEPIPSNATDHTPRRDQS) is domain II. Residues 124–340 (RINTALTFDS…GALRKILAYS (217 aa)) are domain III, AAA+ region. The ATP site is built by glycine 168, glycine 170, lysine 171, and threonine 172. The interval 341–460 (RFHGKDITIE…LHVLEQTLKG (120 aa)) is domain IV, binds dsDNA.

This sequence belongs to the DnaA family. In terms of assembly, oligomerizes as a right-handed, spiral filament on DNA at oriC.

It localises to the cytoplasm. In terms of biological role, plays an essential role in the initiation and regulation of chromosomal replication. ATP-DnaA binds to the origin of replication (oriC) to initiate formation of the DNA replication initiation complex once per cell cycle. Binds the DnaA box (a 9 base pair repeat at the origin) and separates the double-stranded (ds)DNA. Forms a right-handed helical filament on oriC DNA; dsDNA binds to the exterior of the filament while single-stranded (ss)DNA is stabiized in the filament's interior. The ATP-DnaA-oriC complex binds and stabilizes one strand of the AT-rich DNA unwinding element (DUE), permitting loading of DNA polymerase. After initiation quickly degrades to an ADP-DnaA complex that is not apt for DNA replication. Binds acidic phospholipids. This is Chromosomal replication initiator protein DnaA from Herminiimonas arsenicoxydans.